We begin with the raw amino-acid sequence, 524 residues long: Hydroxysteroid dehydrogenase-like protein 2 (524 aa).

Residues Gly-17–Gly-23, Lys-42, and Asp-74 contribute to the NADP(+) site. Lys-42 is modified (N6-(2-hydroxyisobutyryl)lysine). N6-acetyllysine is present on Lys-116. The active-site Proton acceptor is Tyr-168. Residue Lys-172 coordinates NADP(+). Over residues Glu-283 to Gln-300 the composition is skewed to basic and acidic residues. Residues Glu-283–Lys-410 form a disordered region. Positions Leu-301–Gln-391 are enriched in low complexity. The 108-residue stretch at Gly-414–Asn-521 folds into the SCP2 domain. Lys-424 carries the N6-succinyllysine modification.

The protein belongs to the short-chain dehydrogenases/reductases (SDR) family.

Its subcellular location is the peroxisome. It localises to the mitochondrion. In terms of biological role, has apparently no steroid dehydrogenase activity. Controls bile acid (BA) and lipid metabolism in response to nutritional cues. In Rattus norvegicus (Rat), this protein is Hydroxysteroid dehydrogenase-like protein 2 (Hsdl2).